We begin with the raw amino-acid sequence, 687 residues long: Glycine--tRNA ligase beta subunit (687 aa).

It belongs to the class-II aminoacyl-tRNA synthetase family. Tetramer of two alpha and two beta subunits.

It is found in the cytoplasm. The enzyme catalyses tRNA(Gly) + glycine + ATP = glycyl-tRNA(Gly) + AMP + diphosphate. In Geobacter sp. (strain M21), this protein is Glycine--tRNA ligase beta subunit.